The following is a 170-amino-acid chain: Large ribosomal subunit protein uL16 (170 aa).

This sequence belongs to the universal ribosomal protein uL16 family.

The sequence is that of Large ribosomal subunit protein uL16 from Methanospirillum hungatei JF-1 (strain ATCC 27890 / DSM 864 / NBRC 100397 / JF-1).